Consider the following 278-residue polypeptide: Large ribosomal subunit protein uL2c (278 aa).

Residues 224 to 256 (NPVDHPHGGGEGRAPIGRKKPTTPWGYPALGRK) are disordered.

This sequence belongs to the universal ribosomal protein uL2 family. As to quaternary structure, part of the 50S ribosomal subunit.

The protein localises to the plastid. This is Large ribosomal subunit protein uL2c (rpl2) from Cuscuta exaltata (Tall dodder).